Reading from the N-terminus, the 235-residue chain is Thymidylate kinase (235 aa).

10-17 (GINGVEKS) provides a ligand contact to ATP.

The protein belongs to the thymidylate kinase family.

It catalyses the reaction dTMP + ATP = dTDP + ADP. It functions in the pathway pyrimidine metabolism; dTTP biosynthesis. Catalyzes the conversion of dTMP to dTDP. The polypeptide is Thymidylate kinase (TMK) (African swine fever virus (isolate Pig/Kenya/KEN-50/1950) (ASFV)).